The primary structure comprises 343 residues: MTKDFRENVFQGRSVLAEKDFTAEELEYLIDFGLHLKTLKKNHIPHRYLEGKNIALLFEKSSTRTRSAFTTASIDLGAHPEYLGQNDIQLGKKESTSDTAKVLGSMFDGIEFRGFKQSDAEILARDSGVPVWNGLTDEWHPTQMLADFMTVKENFGKLKGLTLTFMGDGRNNVANSLLVTGAILGVNIHIVAPKELFPTKETQDLAKGFAEKSGAKLLVTDDLAEGMRGSNVVYTDVWVSMGESNWEERVNLLKPYQVNMEALKMTGTPDDELIFMHCLPAFHNVETQYGQDIKEKYGITEMEVTDEVFTSKYARQFEEAENRMHSIKAMMAATLGNLFIPRA.

Carbamoyl phosphate-binding positions include 62-65 (STRT), Gln-89, Arg-113, and 140-143 (HPTQ). L-ornithine is bound by residues Asn-172, Asp-236, and 240–241 (SM). Carbamoyl phosphate is bound by residues 278–279 (CL) and Arg-323.

Belongs to the aspartate/ornithine carbamoyltransferase superfamily. OTCase family.

The protein localises to the cytoplasm. It carries out the reaction carbamoyl phosphate + L-ornithine = L-citrulline + phosphate + H(+). Its pathway is amino-acid degradation; L-arginine degradation via ADI pathway; carbamoyl phosphate from L-arginine: step 2/2. Its function is as follows. Reversibly catalyzes the transfer of the carbamoyl group from carbamoyl phosphate (CP) to the N(epsilon) atom of ornithine (ORN) to produce L-citrulline. This Levilactobacillus brevis (strain ATCC 367 / BCRC 12310 / CIP 105137 / JCM 1170 / LMG 11437 / NCIMB 947 / NCTC 947) (Lactobacillus brevis) protein is Ornithine carbamoyltransferase.